Consider the following 418-residue polypeptide: Putative ion-transport protein YfeO (418 aa).

Transmembrane regions (helical) follow at residues 10 to 30 (LLLS…LIVV), 54 to 74 (DSPL…GLVI), 99 to 119 (ALPG…SLGP), 120 to 140 (EHPI…RLLP), 149 to 169 (ILAS…AALI), 186 to 206 (LFAP…FFHP), 223 to 243 (ILSG…AVWC), 258 to 278 (VLVL…GGPV), 300 to 320 (DYFL…ASGF), 322 to 342 (GGRI…LHEH), 343 to 363 (VPAV…VLVV), and 371 to 391 (LFMA…CIVM).

Belongs to the chloride channel (TC 2.A.49) family.

It localises to the cell membrane. This chain is Putative ion-transport protein YfeO, found in Escherichia coli O139:H28 (strain E24377A / ETEC).